A 116-amino-acid polypeptide reads, in one-letter code: Small ribosomal subunit protein bS16 (116 aa).

A disordered region spans residues 88 to 116 (RNNPKAAVPGKRMAELAKKKADRAAASAE). Basic and acidic residues predominate over residues 99 to 110 (RMAELAKKKADR).

The protein belongs to the bacterial ribosomal protein bS16 family.

In Cereibacter sphaeroides (strain ATCC 17029 / ATH 2.4.9) (Rhodobacter sphaeroides), this protein is Small ribosomal subunit protein bS16.